The following is a 436-amino-acid chain: DEAD-box ATP-dependent RNA helicase CshB (436 aa).

The Q motif signature appears at 4-32 (QTFTQYDFKPFLIDAVRELRFTEPTGIQQ). A Helicase ATP-binding domain is found at 35–209 (FPVVKKGVSV…KKYMENPEHI (175 aa)). Position 48 to 55 (48 to 55 (SQTGSGKT)) interacts with ATP. A DEAD box motif is present at residues 157-160 (DEAD). Positions 240–388 (MLLQFKPYLA…WADLGERRRR (149 aa)) constitute a Helicase C-terminal domain. Positions 385-436 (RRRRKSRKKPNDELDVMATKVIKKPKKVKPNYKRKLATERDKVKRKYSNKKR) are disordered. Basic residues-rich tracts occupy residues 405–419 (VIKKPKKVKPNYKRK) and 427–436 (VKRKYSNKKR).

The protein belongs to the DEAD box helicase family. CshB subfamily.

The protein resides in the cytoplasm. The enzyme catalyses ATP + H2O = ADP + phosphate + H(+). Probable DEAD-box RNA helicase. May work in conjunction with the cold shock proteins to ensure proper initiation of transcription at low and optimal temperatures. Unwinds dsRNA in both 5'- and 3'-directions and shows RNA-dependent ATPase activity. Probably has a somewhat redundant function with CshA, as cshA can partially complement the growth effects of a cshB deletion. The sequence is that of DEAD-box ATP-dependent RNA helicase CshB from Bacillus cereus (strain ATCC 14579 / DSM 31 / CCUG 7414 / JCM 2152 / NBRC 15305 / NCIMB 9373 / NCTC 2599 / NRRL B-3711).